Reading from the N-terminus, the 183-residue chain is Small ribosomal subunit protein uS4c (183 aa).

In terms of domain architecture, S4 RNA-binding spans 82–143; sequence MRLDNILFRL…KQRSKALIQN (62 aa).

Belongs to the universal ribosomal protein uS4 family. In terms of assembly, part of the 30S ribosomal subunit. Contacts protein S5. The interaction surface between S4 and S5 is involved in control of translational fidelity.

Its subcellular location is the plastid. The protein resides in the chloroplast. Functionally, one of the primary rRNA binding proteins, it binds directly to 16S rRNA where it nucleates assembly of the body of the 30S subunit. With S5 and S12 plays an important role in translational accuracy. The chain is Small ribosomal subunit protein uS4c (rps4) from Schizorhiza neglecta (Lapeirousia neglecta).